The following is a 489-amino-acid chain: Lysine--tRNA ligase (489 aa).

E399 and E406 together coordinate Mg(2+).

Belongs to the class-II aminoacyl-tRNA synthetase family. As to quaternary structure, homodimer. The cofactor is Mg(2+).

It is found in the cytoplasm. The enzyme catalyses tRNA(Lys) + L-lysine + ATP = L-lysyl-tRNA(Lys) + AMP + diphosphate. This chain is Lysine--tRNA ligase, found in Malacoplasma penetrans (strain HF-2) (Mycoplasma penetrans).